The sequence spans 106 residues: Small ribosomal subunit protein bS16 (106 aa).

It belongs to the bacterial ribosomal protein bS16 family.

In Wolbachia pipientis wMel, this protein is Small ribosomal subunit protein bS16.